Consider the following 375-residue polypeptide: Flagellar P-ring protein (375 aa).

The signal sequence occupies residues 1–23; that stretch reads MFNQSFLKYMLFGFFLFSFHAHA.

It belongs to the FlgI family. As to quaternary structure, the basal body constitutes a major portion of the flagellar organelle and consists of four rings (L,P,S, and M) mounted on a central rod.

It is found in the bacterial flagellum basal body. In terms of biological role, assembles around the rod to form the L-ring and probably protects the motor/basal body from shearing forces during rotation. The sequence is that of Flagellar P-ring protein from Buchnera aphidicola subsp. Baizongia pistaciae (strain Bp).